A 210-amino-acid chain; its full sequence is Protein LURP-one-related 5 (210 aa).

It belongs to the LOR family.

Might be related to the phospholipid scramblase and tubby-like superfamily of membrane tethered transcription factors. This chain is Protein LURP-one-related 5, found in Arabidopsis thaliana (Mouse-ear cress).